We begin with the raw amino-acid sequence, 102 residues long: RNA-binding protein Hfq (102 aa).

A Sm domain is found at 9-68 (DPFLNALRRERVPVSIYLVNGIKLQGQIESFDQFVILLKNTVSQMVYKHAISTVVPSRPV). Residues 63–102 (VPSRPVSHHSNNASGGTSSNYHHGSSAQNTSAQQDSEETE) are disordered. The span at 70-96 (HHSNNASGGTSSNYHHGSSAQNTSAQQ) shows a compositional bias: polar residues.

Belongs to the Hfq family. As to quaternary structure, homohexamer.

Its function is as follows. RNA chaperone that binds small regulatory RNA (sRNAs) and mRNAs to facilitate mRNA translational regulation in response to envelope stress, environmental stress and changes in metabolite concentrations. Also binds with high specificity to tRNAs. This chain is RNA-binding protein Hfq, found in Shigella boydii serotype 18 (strain CDC 3083-94 / BS512).